A 237-amino-acid chain; its full sequence is MPAATWTASPSPPNWPVPMPRRPPMPRSVKRDRWIALGLLLLVMGVAYLVLVHPWFTQPMLAVQDDLQSLRERELRVRVQLQQAPQVSQRLQQARQTLQSRPGFLPESSAELASAGLVQRLERAVVDASPGNRSCAISNRSPLQPETKRFTRVAVQVRLRCGTPELASVLYSLENGTPRLFVDNLNVMAQRYQLSPNESGNGLDIAFELAGYLRPGSNAGPVNTGAAPAAGEASNAP.

Residues 1-21 (MPAATWTASPSPPNWPVPMPR) form a disordered region. Positions 10 to 21 (PSPPNWPVPMPR) are enriched in pro residues.

The sequence is that of Protein XpsM (xpsM) from Xanthomonas campestris pv. campestris (strain ATCC 33913 / DSM 3586 / NCPPB 528 / LMG 568 / P 25).